The primary structure comprises 304 residues: Voltage-dependent anion channel-forming protein YneE (304 aa).

The next 4 helical transmembrane spans lie at 28–48 (LLLN…YTHL), 50–70 (IKFT…FLGF), 194–214 (VLAG…TLIL), and 220–240 (LFCI…TPFI).

Belongs to the anion channel-forming bestrophin (TC 1.A.46) family.

The protein resides in the cell membrane. The chain is Voltage-dependent anion channel-forming protein YneE (yneE) from Escherichia coli (strain K12).